Reading from the N-terminus, the 304-residue chain is tRNA uridine(34) hydroxylase (304 aa).

In terms of domain architecture, Rhodanese spans 124–219 (QDEETLLIDT…YLETIPKEDS (96 aa)). Catalysis depends on cysteine 179, which acts as the Cysteine persulfide intermediate.

It belongs to the TrhO family.

The catalysed reaction is uridine(34) in tRNA + AH2 + O2 = 5-hydroxyuridine(34) in tRNA + A + H2O. Its function is as follows. Catalyzes oxygen-dependent 5-hydroxyuridine (ho5U) modification at position 34 in tRNAs. The polypeptide is tRNA uridine(34) hydroxylase (Bartonella henselae (strain ATCC 49882 / DSM 28221 / CCUG 30454 / Houston 1) (Rochalimaea henselae)).